We begin with the raw amino-acid sequence, 569 residues long: Pyrophosphate--fructose 6-phosphate 1-phosphotransferase subunit beta 2 (569 aa).

Residue glycine 107 coordinates diphosphate. Residue aspartate 201 participates in Mg(2+) binding. Residues 229–231 (TID), 268–269 (KY), 276–278 (MGR), glutamate 337, and 442–445 (YEGR) contribute to the substrate site. Aspartate 231 acts as the Proton acceptor in catalysis.

This sequence belongs to the phosphofructokinase type A (PFKA) family. PPi-dependent PFK group II subfamily. Clade 'Long' sub-subfamily. In terms of assembly, tetramer of two alpha (regulatory) and two beta (catalytic) chains. Mg(2+) serves as cofactor.

It is found in the cytoplasm. It catalyses the reaction beta-D-fructose 6-phosphate + diphosphate = beta-D-fructose 1,6-bisphosphate + phosphate + H(+). Its pathway is carbohydrate degradation; glycolysis; D-glyceraldehyde 3-phosphate and glycerone phosphate from D-glucose: step 3/4. Its activity is regulated as follows. Allosterically activated by fructose 2,6-bisphosphate. Its function is as follows. Catalytic subunit of pyrophosphate--fructose 6-phosphate 1-phosphotransferase. Catalyzes the phosphorylation of D-fructose 6-phosphate, the first committing step of glycolysis. Uses inorganic phosphate (PPi) as phosphoryl donor instead of ATP like common ATP-dependent phosphofructokinases (ATP-PFKs), which renders the reaction reversible, and can thus function both in glycolysis and gluconeogenesis. The protein is Pyrophosphate--fructose 6-phosphate 1-phosphotransferase subunit beta 2 of Arabidopsis thaliana (Mouse-ear cress).